Reading from the N-terminus, the 449-residue chain is Biotin carboxylase (449 aa).

Residues 1–445 (MLDKIVIANR…NIHYLEKKLG (445 aa)) enclose the Biotin carboxylation domain. Residues Lys116, Lys159, 165-166 (GG), 201-204 (EKYL), His209, and His236 each bind ATP. The ATP-grasp domain occupies 120-317 (IAAMKKAGVP…LIKEQLRIAA (198 aa)). Hydrogencarbonate is bound at residue Lys238. Residues Glu276 and Glu288 each coordinate ATP. Glu276, Glu288, and Asn290 together coordinate Mg(2+). The Mn(2+) site is built by Glu276, Glu288, and Asn290. Hydrogencarbonate is bound by residues Arg292, Val295, and Arg338. Residue Arg292 is part of the active site. Residue Arg338 coordinates biotin.

As to quaternary structure, acetyl-CoA carboxylase is a heterohexamer of biotin carboxyl carrier protein, biotin carboxylase and the two subunits of carboxyl transferase in a 2:2 complex. It depends on Mg(2+) as a cofactor. Mn(2+) serves as cofactor.

It catalyses the reaction N(6)-biotinyl-L-lysyl-[protein] + hydrogencarbonate + ATP = N(6)-carboxybiotinyl-L-lysyl-[protein] + ADP + phosphate + H(+). Its pathway is lipid metabolism; malonyl-CoA biosynthesis; malonyl-CoA from acetyl-CoA: step 1/1. This protein is a component of the acetyl coenzyme A carboxylase complex; first, biotin carboxylase catalyzes the carboxylation of the carrier protein and then the transcarboxylase transfers the carboxyl group to form malonyl-CoA. In Escherichia coli O157:H7, this protein is Biotin carboxylase (accC).